Here is a 1535-residue protein sequence, read N- to C-terminus: Lysine-specific demethylase 5D (1535 aa).

The JmjN domain maps to 14 to 55 (CPVFEPSWAEFQDPLGYIAKIRPIAEKSGICKIRPPADWQPP). The ARID domain occupies 79–169 (TRVKLNYLDQ…IIYPYEMFQS (91 aa)). The tract at residues 192–227 (PHSIPLRQSVQPSKFSSYSRRAKRLQPDPEPTEEDI) is disordered. Residues 197-210 (LRQSVQPSKFSSYS) are compositionally biased toward polar residues. Glycyl lysine isopeptide (Lys-Gly) (interchain with G-Cter in SUMO2) cross-links involve residues K205, K229, K244, and K272. A phosphoserine mark is found at S291 and S307. A PHD-type 1 zinc finger spans residues 314–364 (SYICQVCSRGDEDDKLLFCDGCDDNYHIFCLLPPLPEIPRGIWRCPKCILA). Position 430 (Y430) interacts with 2-oxoglutarate. Positions 458–624 (EYATSGWNLN…AGRQCIEHYR (167 aa)) constitute a JmjC domain. Residues H504 and E506 each coordinate Fe cation. Residues S512, N514, and K522 each contribute to the 2-oxoglutarate site. Residue H592 coordinates Fe cation. A C5HC2 zinc finger spans residues 697-749 (CIKCKTTCFLSALACYDCPDGLVCLSHINDLCKCSSSRQYLRYRYTLDELPTM). S884 bears the Phosphoserine mark. The PHD-type 2 zinc finger occupies 1174–1235 (ICVCGQVPAG…DTKFLCPLCM (62 aa)). A Phosphoserine modification is found at S1342. Residues 1425-1519 (HQGSRTRSRA…KDSGSSAACP (95 aa)) are disordered. The segment covering 1428 to 1441 (SRTRSRALERRRRQ) has biased composition (basic residues). Over residues 1473 to 1487 (GREEEHYQEKADREN) the composition is skewed to basic and acidic residues. Residues 1490 to 1517 (LTPSTDHSPSLKGNQNSLQHKDSGSSAA) are compositionally biased toward polar residues.

Belongs to the JARID1 histone demethylase family. As to quaternary structure, interacts withPCGF6, MSH5, ZMYND8, AR. It depends on L-ascorbate as a cofactor. Requires Fe(2+) as cofactor.

Its subcellular location is the nucleus. It catalyses the reaction N(6),N(6),N(6)-trimethyl-L-lysyl(4)-[histone H3] + 3 2-oxoglutarate + 3 O2 = L-lysyl(4)-[histone H3] + 3 formaldehyde + 3 succinate + 3 CO2. Functionally, histone demethylase that specifically demethylates 'Lys-4' of histone H3, thereby playing a central role in histone code. Does not demethylate histone H3 'Lys-9', H3 'Lys-27', H3 'Lys-36', H3 'Lys-79' or H4 'Lys-20'. Demethylates trimethylated and dimethylated but not monomethylated H3 'Lys-4'. May play a role in spermatogenesis. Involved in transcriptional repression of diverse metastasis-associated genes; in this function seems to cooperate with ZMYND8. Suppresses prostate cancer cell invasion. Regulates androgen receptor (AR) transcriptional activity by demethylating H3K4me3 active transcription marks. This Pan troglodytes (Chimpanzee) protein is Lysine-specific demethylase 5D (KDM5D).